The sequence spans 348 residues: Spermidine/putrescine import ATP-binding protein PotA (348 aa).

Residues 6-236 (IRLVNVTKEY…PKNVFVADFI (231 aa)) form the ABC transporter domain. 38 to 45 (GPSGCGKT) contributes to the ATP binding site.

It belongs to the ABC transporter superfamily. Spermidine/putrescine importer (TC 3.A.1.11.1) family. In terms of assembly, the complex is composed of two ATP-binding proteins (PotA), two transmembrane proteins (PotB and PotC) and a solute-binding protein (PotD).

The protein resides in the cell membrane. The enzyme catalyses ATP + H2O + polyamine-[polyamine-binding protein]Side 1 = ADP + phosphate + polyamineSide 2 + [polyamine-binding protein]Side 1.. In terms of biological role, part of the ABC transporter complex PotABCD involved in spermidine/putrescine import. Responsible for energy coupling to the transport system. The sequence is that of Spermidine/putrescine import ATP-binding protein PotA from Desulfitobacterium hafniense (strain Y51).